We begin with the raw amino-acid sequence, 304 residues long: Quinolinate synthase (304 aa).

Residues H23 and S40 each coordinate iminosuccinate. Residue C86 participates in [4Fe-4S] cluster binding. Iminosuccinate is bound by residues 112–114 and S129; that span reads YVN. A [4Fe-4S] cluster-binding site is contributed by C173. Residues 199 to 201 and T216 each bind iminosuccinate; that span reads HPE. C260 lines the [4Fe-4S] cluster pocket.

The protein belongs to the quinolinate synthase family. Type 2 subfamily. The cofactor is [4Fe-4S] cluster.

The protein localises to the cytoplasm. It catalyses the reaction iminosuccinate + dihydroxyacetone phosphate = quinolinate + phosphate + 2 H2O + H(+). It functions in the pathway cofactor biosynthesis; NAD(+) biosynthesis; quinolinate from iminoaspartate: step 1/1. In terms of biological role, catalyzes the condensation of iminoaspartate with dihydroxyacetone phosphate to form quinolinate. The polypeptide is Quinolinate synthase (Methanothermobacter thermautotrophicus (strain ATCC 29096 / DSM 1053 / JCM 10044 / NBRC 100330 / Delta H) (Methanobacterium thermoautotrophicum)).